A 315-amino-acid polypeptide reads, in one-letter code: Ribosomal RNA small subunit methyltransferase H (315 aa).

S-adenosyl-L-methionine-binding positions include 37 to 39 (GGH), Asp57, Phe83, Asp105, and Gln112.

The protein belongs to the methyltransferase superfamily. RsmH family.

The protein resides in the cytoplasm. The catalysed reaction is cytidine(1402) in 16S rRNA + S-adenosyl-L-methionine = N(4)-methylcytidine(1402) in 16S rRNA + S-adenosyl-L-homocysteine + H(+). Functionally, specifically methylates the N4 position of cytidine in position 1402 (C1402) of 16S rRNA. The chain is Ribosomal RNA small subunit methyltransferase H from Pseudomonas putida (strain ATCC 47054 / DSM 6125 / CFBP 8728 / NCIMB 11950 / KT2440).